We begin with the raw amino-acid sequence, 458 residues long: Methylenetetrahydrofolate--tRNA-(uracil-5-)-methyltransferase TrmFO (458 aa).

Residue 12 to 17 (GAGLAG) participates in FAD binding.

It belongs to the MnmG family. TrmFO subfamily. FAD is required as a cofactor.

The protein localises to the cytoplasm. The catalysed reaction is uridine(54) in tRNA + (6R)-5,10-methylene-5,6,7,8-tetrahydrofolate + NADH + H(+) = 5-methyluridine(54) in tRNA + (6S)-5,6,7,8-tetrahydrofolate + NAD(+). It catalyses the reaction uridine(54) in tRNA + (6R)-5,10-methylene-5,6,7,8-tetrahydrofolate + NADPH + H(+) = 5-methyluridine(54) in tRNA + (6S)-5,6,7,8-tetrahydrofolate + NADP(+). Functionally, catalyzes the folate-dependent formation of 5-methyl-uridine at position 54 (M-5-U54) in all tRNAs. This chain is Methylenetetrahydrofolate--tRNA-(uracil-5-)-methyltransferase TrmFO, found in Deinococcus geothermalis (strain DSM 11300 / CIP 105573 / AG-3a).